We begin with the raw amino-acid sequence, 368 residues long: 3-dehydroquinate synthase (368 aa).

Residues 71–76, 105–109, 129–130, Lys142, Lys151, and 169–172 contribute to the NAD(+) site; these read DGESFK, GVIGD, TT, and TLRT. Zn(2+) contacts are provided by Glu184, His247, and His264.

The protein belongs to the sugar phosphate cyclases superfamily. Dehydroquinate synthase family. NAD(+) is required as a cofactor. The cofactor is Co(2+). Requires Zn(2+) as cofactor.

It localises to the cytoplasm. It carries out the reaction 7-phospho-2-dehydro-3-deoxy-D-arabino-heptonate = 3-dehydroquinate + phosphate. The protein operates within metabolic intermediate biosynthesis; chorismate biosynthesis; chorismate from D-erythrose 4-phosphate and phosphoenolpyruvate: step 2/7. Its function is as follows. Catalyzes the conversion of 3-deoxy-D-arabino-heptulosonate 7-phosphate (DAHP) to dehydroquinate (DHQ). This chain is 3-dehydroquinate synthase, found in Ralstonia nicotianae (strain ATCC BAA-1114 / GMI1000) (Ralstonia solanacearum).